The following is a 451-amino-acid chain: Glyceraldehyde-3-phosphate dehydrogenase B, chloroplastic (451 aa).

Residues 1–25 form a disordered region; sequence MATHAALASTRIPTNTRFPSKTSHS. The N-terminal 84 residues, 1–84, are a transit peptide targeting the chloroplast; sequence MATHAALAST…STAVKGVTVA (84 aa). Positions 11 to 25 are enriched in polar residues; the sequence is RIPTNTRFPSKTSHS. Residues 95-96, Asp119, and Arg164 contribute to the NADP(+) site; that span reads RI. Residues 238–240, Thr269, Arg284, 297–298, and Arg320 each bind D-glyceraldehyde 3-phosphate; these read SCT and TG. Catalysis depends on Cys239, which acts as the Nucleophile. Asn403 is an NADP(+) binding site.

Belongs to the glyceraldehyde-3-phosphate dehydrogenase family. As to quaternary structure, tetramer of either four A chains (GAPDH 2) or two A and two B chains (GAPDH 1).

The protein resides in the plastid. The protein localises to the chloroplast. It carries out the reaction D-glyceraldehyde 3-phosphate + phosphate + NADP(+) = (2R)-3-phospho-glyceroyl phosphate + NADPH + H(+). It participates in carbohydrate biosynthesis; Calvin cycle. This is Glyceraldehyde-3-phosphate dehydrogenase B, chloroplastic (GAPB) from Pisum sativum (Garden pea).